A 404-amino-acid chain; its full sequence is Probable tRNA sulfurtransferase (404 aa).

Positions 61-166 constitute a THUMP domain; the sequence is EAVSERLKDV…SGYSYIMCDE (106 aa). ATP is bound by residues 184-185, 209-210, Arg-266, Gly-288, and Gln-297; these read LL and HF.

Belongs to the ThiI family.

The protein resides in the cytoplasm. It carries out the reaction [ThiI sulfur-carrier protein]-S-sulfanyl-L-cysteine + a uridine in tRNA + 2 reduced [2Fe-2S]-[ferredoxin] + ATP + H(+) = [ThiI sulfur-carrier protein]-L-cysteine + a 4-thiouridine in tRNA + 2 oxidized [2Fe-2S]-[ferredoxin] + AMP + diphosphate. The enzyme catalyses [ThiS sulfur-carrier protein]-C-terminal Gly-Gly-AMP + S-sulfanyl-L-cysteinyl-[cysteine desulfurase] + AH2 = [ThiS sulfur-carrier protein]-C-terminal-Gly-aminoethanethioate + L-cysteinyl-[cysteine desulfurase] + A + AMP + 2 H(+). It participates in cofactor biosynthesis; thiamine diphosphate biosynthesis. Catalyzes the ATP-dependent transfer of a sulfur to tRNA to produce 4-thiouridine in position 8 of tRNAs, which functions as a near-UV photosensor. Also catalyzes the transfer of sulfur to the sulfur carrier protein ThiS, forming ThiS-thiocarboxylate. This is a step in the synthesis of thiazole, in the thiamine biosynthesis pathway. The sulfur is donated as persulfide by IscS. In Bacillus cereus (strain AH820), this protein is Probable tRNA sulfurtransferase.